Consider the following 63-residue polypeptide: Translational regulator CsrA (63 aa).

It belongs to the CsrA/RsmA family. As to quaternary structure, homodimer; the beta-strands of each monomer intercalate to form a hydrophobic core, while the alpha-helices form wings that extend away from the core.

Its subcellular location is the cytoplasm. In terms of biological role, a key translational regulator that binds mRNA to regulate translation initiation and/or mRNA stability. Mediates global changes in gene expression, shifting from rapid growth to stress survival by linking envelope stress, the stringent response and the catabolite repression systems. Usually binds in the 5'-UTR; binding at or near the Shine-Dalgarno sequence prevents ribosome-binding, repressing translation, binding elsewhere in the 5'-UTR can activate translation and/or stabilize the mRNA. Its function is antagonized by small RNA(s). This chain is Translational regulator CsrA, found in Haemophilus influenzae (strain PittEE).